The following is a 149-amino-acid chain: uncharacterized protein (149 aa).

This is an uncharacterized protein from Acanthamoeba polyphaga mimivirus (APMV).